A 500-amino-acid chain; its full sequence is MTEQVIDENKLIAERRAKLESIRPNCSANAHPNTFRRTHKAAELQAQYGQNTKEELEALGFKTSIAGRIMAKRGPFLVIQDVSGRIQAYAEKSVQADLKERFQGLDIGDIIGVTGQLHLSGKGDLYVNMEQYELLTKALRPLPADYYGLADQEMRYRQRYVDLIVNEDSRNAFIMRSKVVSAIRNFMIKKEFMEVETPMMHVIPGGASARPFITHHNALDMPMYLRIAPELYLKRLVVGGFERVFEINRNFRNEGLSPRHNPEFTMMEFYMAYADYKDLMDLTEEMLSSIAIELLGSAQMPYGEHTVDFGGPYARLSMLEAIQKYNPDNATIQAMTYEQVKDVEFMRDLAKSLGMKIEKFWTCGQLLEEIFGETAEWQLMQPTFITGYPADISPLARRNDDNHFITDRFEFFIGGREVANGFSELNDAEDQDNRFKAQVDAKDAGDDEAMFYDADYITALEHGLPPTAGQGIGIDRLVMLFTNTHTIRDVILFPAMRPQA.

2 residues coordinate Mg(2+): Glu-410 and Glu-417.

The protein belongs to the class-II aminoacyl-tRNA synthetase family. Homodimer. The cofactor is Mg(2+).

It is found in the cytoplasm. It catalyses the reaction tRNA(Lys) + L-lysine + ATP = L-lysyl-tRNA(Lys) + AMP + diphosphate. This chain is Lysine--tRNA ligase, found in Shewanella baltica (strain OS155 / ATCC BAA-1091).